Reading from the N-terminus, the 391-residue chain is Elongation factor Tu (391 aa).

The 192-residue stretch at 10-201 (KPHVNIGTIG…AVDEYIPTPA (192 aa)) folds into the tr-type G domain. The segment at 19–26 (GHVDHGKT) is G1. 19 to 26 (GHVDHGKT) contacts GTP. Thr-26 is a binding site for Mg(2+). Residues 55-59 (GITIS) form a G2 region. Residues 76 to 79 (DCPG) are G3. Residues 76 to 80 (DCPGH) and 131 to 134 (NKVD) contribute to the GTP site. The G4 stretch occupies residues 131–134 (NKVD). Residues 169–171 (SAL) are G5.

It belongs to the TRAFAC class translation factor GTPase superfamily. Classic translation factor GTPase family. EF-Tu/EF-1A subfamily. As to quaternary structure, monomer.

It is found in the cytoplasm. The enzyme catalyses GTP + H2O = GDP + phosphate + H(+). In terms of biological role, GTP hydrolase that promotes the GTP-dependent binding of aminoacyl-tRNA to the A-site of ribosomes during protein biosynthesis. This Cereibacter sphaeroides (strain ATCC 17025 / ATH 2.4.3) (Rhodobacter sphaeroides) protein is Elongation factor Tu.